A 716-amino-acid polypeptide reads, in one-letter code: Hepatocyte growth factor-like protein (716 aa).

The N-terminal stretch at 1–18 (MGWLPLLLLLVQCSRALG) is a signal peptide. The 87-residue stretch at 19–105 (QRSPLNDFQL…SLCHLFQKKD (87 aa)) folds into the PAN domain. 20 disulfide bridges follow: C56–C78, C60–C66, C110–C186, C131–C169, C157–C181, C191–C268, C194–C333, C212–C251, C240–C263, C292–C370, C313–C352, C341–C364, C379–C457, C400–C440, C428–C452, C477–C593, C512–C528, C607–C672, C637–C651, and C662–C690. An N-linked (GlcNAc...) asparagine glycan is attached at N72. Kringle domains are found at residues 110–186 (CIMD…IKTC), 191–268 (CVLC…LPSC), 292–370 (CFRG…IPRC), and 379–457 (CYHG…LQRC). Residue N173 is glycosylated (N-linked (GlcNAc...) asparagine). A glycan (N-linked (GlcNAc...) asparagine) is linked at N305. Residues 489–714 (VVGGHPGNSP…FVDWINKVMQ (226 aa)) enclose the Peptidase S1 domain. A glycan (N-linked (GlcNAc...) asparagine) is linked at N620.

It belongs to the peptidase S1 family. Plasminogen subfamily. Dimer of an alpha chain and a beta chain linked by a disulfide bond. Interacts (via beta chain) with MST1R (via SEMA domain). Post-translationally, cleaved after Arg-488, probably by HPN/Hepsin, to yield the active form consisting of two disulfide-linked chains. As to expression, liver. Lower levels in lung, placenta and adrenal.

It localises to the secreted. This chain is Hepatocyte growth factor-like protein (Mst1), found in Mus musculus (Mouse).